Here is a 255-residue protein sequence, read N- to C-terminus: 5-oxoprolinase subunit A 2 (255 aa).

It belongs to the LamB/PxpA family. As to quaternary structure, forms a complex composed of PxpA, PxpB and PxpC.

It catalyses the reaction 5-oxo-L-proline + ATP + 2 H2O = L-glutamate + ADP + phosphate + H(+). Its function is as follows. Catalyzes the cleavage of 5-oxoproline to form L-glutamate coupled to the hydrolysis of ATP to ADP and inorganic phosphate. The protein is 5-oxoprolinase subunit A 2 of Agrobacterium fabrum (strain C58 / ATCC 33970) (Agrobacterium tumefaciens (strain C58)).